We begin with the raw amino-acid sequence, 481 residues long: Aspartyl/glutamyl-tRNA(Asn/Gln) amidotransferase subunit B (481 aa).

Belongs to the GatB/GatE family. GatB subfamily. As to quaternary structure, heterotrimer of A, B and C subunits.

It catalyses the reaction L-glutamyl-tRNA(Gln) + L-glutamine + ATP + H2O = L-glutaminyl-tRNA(Gln) + L-glutamate + ADP + phosphate + H(+). The enzyme catalyses L-aspartyl-tRNA(Asn) + L-glutamine + ATP + H2O = L-asparaginyl-tRNA(Asn) + L-glutamate + ADP + phosphate + 2 H(+). Its function is as follows. Allows the formation of correctly charged Asn-tRNA(Asn) or Gln-tRNA(Gln) through the transamidation of misacylated Asp-tRNA(Asn) or Glu-tRNA(Gln) in organisms which lack either or both of asparaginyl-tRNA or glutaminyl-tRNA synthetases. The reaction takes place in the presence of glutamine and ATP through an activated phospho-Asp-tRNA(Asn) or phospho-Glu-tRNA(Gln). The protein is Aspartyl/glutamyl-tRNA(Asn/Gln) amidotransferase subunit B of Pseudomonas entomophila (strain L48).